The primary structure comprises 247 residues: MSSTAPEDVARPLLALPAIEAFDAIVRGRRSVRSYADVQVPRRTVRDVLELAARAPSNSNVQPWHTYVLTGRHKRALTDSVLRYYDTIGRTVREFDYQPGPDGWEEPYKERRESFGEGLYGRALGLSLADVDDREFYHRRNYDFFAAPVGLIVTVARNPRLSALIDAGAYIQTILLSARSRGLSTCAQASFLDFHPAVRECLAIPTHRTIVCGISLGYEDAQHPIASNATTREPVDRHVTFLWDDDD.

Arginine 29–arginine 33 contacts FMN. NADP(+)-binding residues include serine 59, arginine 112, tyrosine 120, and leucine 126. Arginine 232 is a binding site for FMN.

Belongs to the nitroreductase family. It depends on FMN as a cofactor.

It catalyses the reaction 4-nitrobenzoate + 2 NADPH + 2 H(+) = 4-hydroxylaminobenzoate + 2 NADP(+) + H2O. In terms of biological role, nitroreductase involved in the degradation of nitroaromatic compounds. Catalyzes the conversion of 4-nitrobenzoate to 4-hydroxylaminobenzoate. The chain is 4-nitrobenzoate reductase from Nocardioides sp. (strain LMS-CY).